We begin with the raw amino-acid sequence, 383 residues long: Chaperone protein DnaJ (383 aa).

The J domain occupies 5–70 (DYYELLGVSR…QKRAAYDRFG (66 aa)). The CR-type zinc finger occupies 140–219 (GTKTEIRVPT…CSGAGTVPRE (80 aa)). 8 residues coordinate Zn(2+): cysteine 153, cysteine 156, cysteine 171, cysteine 174, cysteine 193, cysteine 196, cysteine 207, and cysteine 210. CXXCXGXG motif repeat units follow at residues 153 to 160 (CDACSGTG), 171 to 178 (CPTCGGAG), 193 to 200 (CPTCGGAG), and 207 to 214 (CRVCSGAG).

It belongs to the DnaJ family. Homodimer. It depends on Zn(2+) as a cofactor.

Its subcellular location is the cytoplasm. In terms of biological role, participates actively in the response to hyperosmotic and heat shock by preventing the aggregation of stress-denatured proteins and by disaggregating proteins, also in an autonomous, DnaK-independent fashion. Unfolded proteins bind initially to DnaJ; upon interaction with the DnaJ-bound protein, DnaK hydrolyzes its bound ATP, resulting in the formation of a stable complex. GrpE releases ADP from DnaK; ATP binding to DnaK triggers the release of the substrate protein, thus completing the reaction cycle. Several rounds of ATP-dependent interactions between DnaJ, DnaK and GrpE are required for fully efficient folding. Also involved, together with DnaK and GrpE, in the DNA replication of plasmids through activation of initiation proteins. This Acidiphilium cryptum (strain JF-5) protein is Chaperone protein DnaJ.